The following is a 198-amino-acid chain: Segregation and condensation protein B (198 aa).

This sequence belongs to the ScpB family. As to quaternary structure, homodimer. Homodimerization may be required to stabilize the binding of ScpA to the Smc head domains. Component of a cohesin-like complex composed of ScpA, ScpB and the Smc homodimer, in which ScpA and ScpB bind to the head domain of Smc. The presence of the three proteins is required for the association of the complex with DNA.

The protein resides in the cytoplasm. Participates in chromosomal partition during cell division. May act via the formation of a condensin-like complex containing Smc and ScpA that pull DNA away from mid-cell into both cell halves. This is Segregation and condensation protein B from Streptococcus mutans serotype c (strain ATCC 700610 / UA159).